The following is a 27-amino-acid chain: VRDICKKEAERQDLSSCENYITQRRGY.

As to quaternary structure, homodimer. Post-translationally, contains disulfide bonds. Glycosylated.

Its function is as follows. Inhibits trypsin (IC(50)=1.25 uM) but not chymotrypsin or papain. Has antibacterial activity against S.enterica ATCC 10708 (MIC=5 ug/ml) and S.aureus ATCC 25923 (MIC=5 ug/ml) but not against B.subtilis ATCC 6633 or P.aeruginosa ATCC 25619. Has no hemolytic activity against human erythrocytes. Is not toxic to mice. This Jatropha curcas (Barbados nut) protein is Trypsin inhibitor 1.